Consider the following 357-residue polypeptide: Deoxyuridylate hydroxymethyltransferase (357 aa).

This sequence belongs to the thymidylate synthase family.

The catalysed reaction is dUMP + (6R)-5,10-methylene-5,6,7,8-tetrahydrofolate + H2O = 5-hydroxymethyl-dUMP + (6S)-5,6,7,8-tetrahydrofolate. Its function is as follows. Catalyzes formation of 5-hydroxymethyldeoxyuridylate (5HMdUMP) as a step in the pathway that replaces dTMP by thymidine hypermodifications in the viral genome. As a final result of the pathway of hypermodification, 5-Nalpha-putrescinylthymidine (Nalpha-PutT) substitutes for about 50% of thymidines in the viral DNA. These modifications probably prevent degradation of viral genome by the host restriction-modification antiviral defense system. The protein is Deoxyuridylate hydroxymethyltransferase of Delftia acidovorans (Pseudomonas acidovorans).